We begin with the raw amino-acid sequence, 123 residues long: Ig heavy chain V region HPCM6 (123 aa).

One can recognise an Ig-like domain in the interval glutamate 1–glycine 114.

This Mus musculus (Mouse) protein is Ig heavy chain V region HPCM6.